The following is a 186-amino-acid chain: Transposon Tn21 resolvase (186 aa).

The 134-residue stretch at 4–137 folds into the Resolvase/invertase-type recombinase catalytic domain; it reads QRIGYIRVST…EGIALAKQRG (134 aa). Serine 12 serves as the catalytic O-(5'-phospho-DNA)-serine intermediate. A DNA-binding region (H-T-H motif) is located at residues 164-183; the sequence is KTKLAREFGISRETLYQYLR.

Belongs to the site-specific recombinase resolvase family.

Functionally, resolvase catalyzes the resolution (a site-specific recombination) of the cointegrated replicon to yield the final transposition products. The polypeptide is Transposon Tn21 resolvase (tnpR) (Escherichia coli).